Consider the following 84-residue polypeptide: Putative regulatory protein Dde_2720 (84 aa).

It belongs to the RemA family.

The chain is Putative regulatory protein Dde_2720 from Oleidesulfovibrio alaskensis (strain ATCC BAA-1058 / DSM 17464 / G20) (Desulfovibrio alaskensis).